Here is a 523-residue protein sequence, read N- to C-terminus: Synaptotagmin-10 (523 aa).

The Vesicular portion of the chain corresponds to 1 to 55 (MSFRKEDGVSSLCQKALHIITELCFAGQVEWDKCSGIFPADRSGQGGGGTDISVS). The cysteine motif stretch occupies residues 13–35 (CQKALHIITELCFAGQVEWDKCS). The helical transmembrane segment at 56 to 76 (LLAVVVSFCGLALLVVSLFVF) threads the bilayer. Residues 77-523 (WKLCWPCWKS…CSSPRPPSTP (447 aa)) are Cytoplasmic-facing. Thr136 bears the Phosphothreonine mark. C2 domains are found at residues 231–352 (TCGK…TVWK) and 363–496 (DLGE…THWH). Ca(2+)-binding residues include Asp262, Asp268, Asp320, Phe321, Asp322, Ser325, Asp328, Asp394, Asp400, Asp454, and Asp456.

The protein belongs to the synaptotagmin family. In terms of assembly, homodimer; disulfide-linked via the cysteine motif. Can also form heterodimers with SYT3, SYT6, SYT7 and SYT9. The cofactor is Ca(2+). In terms of tissue distribution, highly expressed in the olfactory bulb.

The protein localises to the cytoplasmic vesicle. Its subcellular location is the secretory vesicle membrane. In terms of biological role, ca(2+) sensor specifically required for the Ca(2+)-dependent exocytosis of secretory vesicles containing IGF1 in neurons of the olfactory bulb. Exocytosis of IGF1 is required for sensory perception of smell. Not involved in Ca(2+)-dependent synaptic vesicle exocytosis. Acts through Ca(2+) and phospholipid binding to the C2 domain: Ca(2+) induces binding of the C2-domains to phospholipid membranes and to assembled SNARE-complexes; both actions contribute to triggering exocytosis. The protein is Synaptotagmin-10 of Mus musculus (Mouse).